A 196-amino-acid chain; its full sequence is DnaA initiator-associating protein DiaA (196 aa).

One can recognise an SIS domain in the interval 34–196; sequence LVQSLLNGNK…DNTLFPHQDD (163 aa).

It belongs to the SIS family. DiaA subfamily. In terms of assembly, homotetramer; dimer of dimers.

Functionally, required for the timely initiation of chromosomal replication via direct interactions with the DnaA initiator protein. This Cronobacter sakazakii (strain ATCC BAA-894) (Enterobacter sakazakii) protein is DnaA initiator-associating protein DiaA.